We begin with the raw amino-acid sequence, 384 residues long: 5-cytosine rRNA methyltransferase NSUN4 (384 aa).

The N-terminal 25 residues, Met-1 to His-25, are a transit peptide targeting the mitochondrion. The S-adenosyl-L-methionine site is built by Gly-185, Gly-186, Lys-187, and Asp-204. Ser-206 carries the phosphoserine modification. Positions 209, 237, 238, and 255 each coordinate S-adenosyl-L-methionine. The Nucleophile role is filled by Cys-310.

Belongs to the class I-like SAM-binding methyltransferase superfamily. RsmB/NOP family. In terms of assembly, heterodimer with MTERFD2/MTERF4; this interaction seems to be required for NSUN4 recruitment to the mitochondrial large ribosomal subunit.

It localises to the mitochondrion. The catalysed reaction is a cytidine in rRNA + S-adenosyl-L-methionine = a 5-methylcytidine in rRNA + S-adenosyl-L-homocysteine + H(+). It catalyses the reaction a cytidine in mRNA + S-adenosyl-L-methionine = a 5-methylcytidine in mRNA + S-adenosyl-L-homocysteine + H(+). Functionally, mitochondrial RNA cytosine C(5)-methyltransferase that methylates cytosine to 5-methylcytosine (m5C) in various RNAs, such as rRNAs, mRNAs and some long non-coding RNAs (lncRNAs). Involved in mitochondrial ribosome small subunit (SSU) maturation by catalyzing methylation of mitochondrial 12S rRNA; the function is independent of MTERFD2/MTERF4 and assembled mitochondrial ribosome large subunit (LSU). Targeted to LSU by MTERFD2/MTERF4 and probably is involved in a final step in ribosome biogenesis to ensure that SSU and LSU are assembled. In vitro can methylate 16S rRNA of the LSU; the methylation is enhanced by MTERFD/MTERF4. Also acts as a regulator of innate immunity by marking double-stranded mitochondrial RNAs(mt-dsRNAs) generated in response to stress: catalyzes m5C modification on mitochondrial RNAs, such as a mRNAs and lncRNAs, with a preference for the termini of light-strand lncRNAs, promoting their degradation and cytosolic release. Modified light-strand lncRNAs are then recognized by C1QBP reader and recruited to the mitochondrial degradosome complex, which promotes their degradation. This is 5-cytosine rRNA methyltransferase NSUN4 from Homo sapiens (Human).